Here is a 170-residue protein sequence, read N- to C-terminus: Adenine phosphoribosyltransferase (170 aa).

Belongs to the purine/pyrimidine phosphoribosyltransferase family. In terms of assembly, homodimer.

It is found in the cytoplasm. The catalysed reaction is AMP + diphosphate = 5-phospho-alpha-D-ribose 1-diphosphate + adenine. The protein operates within purine metabolism; AMP biosynthesis via salvage pathway; AMP from adenine: step 1/1. Catalyzes a salvage reaction resulting in the formation of AMP, that is energically less costly than de novo synthesis. The protein is Adenine phosphoribosyltransferase of Cyanothece sp. (strain PCC 7425 / ATCC 29141).